A 149-amino-acid chain; its full sequence is Large ribosomal subunit protein bL9 (149 aa).

Belongs to the bacterial ribosomal protein bL9 family.

Binds to the 23S rRNA. The polypeptide is Large ribosomal subunit protein bL9 (Tolumonas auensis (strain DSM 9187 / NBRC 110442 / TA 4)).